Consider the following 517-residue polypeptide: ATP synthase subunit alpha (517 aa).

174-181 (GDRQTGKT) lines the ATP pocket.

Belongs to the ATPase alpha/beta chains family. In terms of assembly, F-type ATPases have 2 components, CF(1) - the catalytic core - and CF(0) - the membrane proton channel. CF(1) has five subunits: alpha(3), beta(3), gamma(1), delta(1), epsilon(1). CF(0) has three main subunits: a(1), b(2) and c(9-12). The alpha and beta chains form an alternating ring which encloses part of the gamma chain. CF(1) is attached to CF(0) by a central stalk formed by the gamma and epsilon chains, while a peripheral stalk is formed by the delta and b chains.

The protein localises to the cell inner membrane. The catalysed reaction is ATP + H2O + 4 H(+)(in) = ADP + phosphate + 5 H(+)(out). Its function is as follows. Produces ATP from ADP in the presence of a proton gradient across the membrane. The alpha chain is a regulatory subunit. In Variovorax paradoxus (strain S110), this protein is ATP synthase subunit alpha.